The sequence spans 344 residues: Follistatin (344 aa).

Residues 1–29 (MVRARHQPGGLCLLLLLLCQFMEDRSAQA) form the signal peptide. One can recognise a TB domain in the interval 30–103 (GNCWLRQAKN…TCENVDCGPG (74 aa)). 18 disulfides stabilise this stretch: cysteine 32–cysteine 55, cysteine 42–cysteine 88, cysteine 56–cysteine 91, cysteine 95–cysteine 106, cysteine 100–cysteine 116, cysteine 118–cysteine 150, cysteine 122–cysteine 143, cysteine 132–cysteine 164, cysteine 168–cysteine 179, cysteine 173–cysteine 189, cysteine 192–cysteine 225, cysteine 196–cysteine 218, cysteine 207–cysteine 239, cysteine 245–cysteine 256, cysteine 250–cysteine 267, cysteine 270–cysteine 302, cysteine 274–cysteine 295, and cysteine 284–cysteine 316. Residues 94–117 (TCENVDCGPGKKCRMNKKNKPRCV) form the Follistatin-like 1 domain. The Kazal-like 1 domain occupies 112 to 166 (NKPRCVCAPDCSNITWKGPVCGLDGKTYRNECALLKARCKEQPELEVQYQGRCKK). N-linked (GlcNAc...) asparagine glycosylation is present at asparagine 124. The region spanning 167 to 190 (TCRDVFCPGSSTCVVDQTNNAYCV) is the Follistatin-like 2 domain. In terms of domain architecture, Kazal-like 2 spans 186–241 (NAYCVTCNRICPEPASSEQYLCGNDGVTYSSACHLRKATCLLGRSIGLAYEGKCIK). The region spanning 244 to 268 (SCEDIQCTGGKKCLWDFKVGRGRCS) is the Follistatin-like 3 domain. The 55-residue stretch at 264-318 (RGRCSLCDELCPDSKSDEPVCASDNATYASECAMKEAACSSGVLLEVKHSGSCNS) folds into the Kazal-like 3 domain. N-linked (GlcNAc...) asparagine glycosylation is present at asparagine 288. Positions 314–344 (GSCNSISEDTEEEEEDEDQDYSFPISSILEW) are disordered. Acidic residues predominate over residues 321–333 (EDTEEEEEDEDQD).

Interacts with GDF11. Interacts with activin A/INHBA. Interacts with MYOSTATIN/MSTN. As to expression, isoform 1 is the predominant isoform in serum but is undetectable in follicular fluid. In the embryo, strong expression is seen in the palatal epithelia, including the medial edge epithelial and midline epithelial seam of the palatal shelves. Less pronounced expression is also seen throughout the palatal shelf and tongue mesenchyme.

It localises to the secreted. Its subcellular location is the nucleus. The protein resides in the nucleolus. In terms of biological role, multifunctional regulatory protein whose primary function is to antagonize members of the transforming growth factor beta (TGF-beta) superfamily including activin, myostatin, GDF11 or bone morphogenetic proteins (BMPs). Mechanistically, binds to these ligands in the extracellular space, blocking their type II receptor-binding site to inhibit downstream signaling. Plays an essential role in muscle fiber formation and growth both by preventing the repressive effects of myostatin and through SMAD3/AKT/mTOR signaling independently of myostatin. Also promotes neural differentiation by antagonizing the action BMP4. Acts as a specific inhibitor of the biosynthesis and secretion of pituitary follicle stimulating hormone (FSH) by sequestering activin A/INHBA. On the other hand, translocates into the nucleus where it down-regulates rRNA synthesis and ribosome biogenesis to maintain cellular energy homeostasis by binding to rDNA. This Homo sapiens (Human) protein is Follistatin.